Here is a 194-residue protein sequence, read N- to C-terminus: 2,4-dinitrotoluene dioxygenase system, small oxygenase component (194 aa).

Belongs to the bacterial ring-hydroxylating dioxygenase beta subunit family. As to quaternary structure, the 2,4-dinitrotoluene dioxygenase (DNTDO) multicomponent enzyme system is composed of an electron transfer component and a dioxygenase component (iron sulfur protein (ISP)). The electron transfer component is composed of a ferredoxin reductase (DntAa) and a ferredoxin (DntAb), and the dioxygenase component is formed of a large alpha subunit (DntAc) and a small beta subunit (DntAd).

Component of the 2,4-dinitrotoluene dioxygenase (DNTDO) multicomponent enzyme system which catalyzes the incorporation of both atoms of molecular oxygen into 2,4-dinitrotoluene (DNT) to form 4-methyl-5-nitrocatechol (MNC) and nitrite. The beta subunit seems to have a structural role in the holoenzyme. Also able to convert naphthalene to cis-(1R,2S)-dihydroxy-1,2-dihydronaphthalene. This is 2,4-dinitrotoluene dioxygenase system, small oxygenase component from Burkholderia sp. (strain RASC).